A 116-amino-acid polypeptide reads, in one-letter code: Ribosome-binding factor A (116 aa).

It belongs to the RbfA family. Monomer. Binds 30S ribosomal subunits, but not 50S ribosomal subunits or 70S ribosomes.

The protein resides in the cytoplasm. Its function is as follows. One of several proteins that assist in the late maturation steps of the functional core of the 30S ribosomal subunit. Associates with free 30S ribosomal subunits (but not with 30S subunits that are part of 70S ribosomes or polysomes). Required for efficient processing of 16S rRNA. May interact with the 5'-terminal helix region of 16S rRNA. The sequence is that of Ribosome-binding factor A from Clostridium botulinum (strain Alaska E43 / Type E3).